Reading from the N-terminus, the 524-residue chain is Cytosolic Fe-S cluster assembly factor NAR1 (524 aa).

The [4Fe-4S] cluster site is built by cysteine 20, cysteine 52, cysteine 55, cysteine 58, cysteine 158, and cysteine 206. The disordered stretch occupies residues isoleucine 362–asparagine 388. Positions asparagine 369–asparagine 388 are enriched in low complexity. [4Fe-4S] cluster-binding residues include cysteine 408 and cysteine 412. Residues serine 501–tryptophan 524 are disordered.

Belongs to the NARF family.

Functionally, component of the cytosolic Fe/S protein assembly machinery. Required for maturation of extramitochondrial Fe/S proteins. May play a role in the transfer of pre-assembled Fe/S clusters to target apoproteins. This Vanderwaltozyma polyspora (strain ATCC 22028 / DSM 70294 / BCRC 21397 / CBS 2163 / NBRC 10782 / NRRL Y-8283 / UCD 57-17) (Kluyveromyces polysporus) protein is Cytosolic Fe-S cluster assembly factor NAR1 (NAR1).